The primary structure comprises 122 residues: Large ribosomal subunit protein bL12 (122 aa).

It belongs to the bacterial ribosomal protein bL12 family. In terms of assembly, homodimer. Part of the ribosomal stalk of the 50S ribosomal subunit. Forms a multimeric L10(L12)X complex, where L10 forms an elongated spine to which 2 to 4 L12 dimers bind in a sequential fashion. Binds GTP-bound translation factors.

In terms of biological role, forms part of the ribosomal stalk which helps the ribosome interact with GTP-bound translation factors. Is thus essential for accurate translation. The sequence is that of Large ribosomal subunit protein bL12 from Mycoplasma genitalium (strain ATCC 33530 / DSM 19775 / NCTC 10195 / G37) (Mycoplasmoides genitalium).